The sequence spans 492 residues: Cobyric acid synthase (492 aa).

The GATase cobBQ-type domain occupies 253–441 (VLKVIAPVYP…LHGLFDTPQA (189 aa)). C334 acts as the Nucleophile in catalysis. The active site involves H433.

The protein belongs to the CobB/CobQ family. CobQ subfamily.

Its pathway is cofactor biosynthesis; adenosylcobalamin biosynthesis. Catalyzes amidations at positions B, D, E, and G on adenosylcobyrinic A,C-diamide. NH(2) groups are provided by glutamine, and one molecule of ATP is hydrogenolyzed for each amidation. This is Cobyric acid synthase from Azoarcus sp. (strain BH72).